A 180-amino-acid polypeptide reads, in one-letter code: Type-1 fimbrial protein subunit (180 aa).

Positions 1–22 (MKKVLLPLAALVLSATASNAMA) are cleaved as a signal peptide. C38 and C78 are joined by a disulfide.

This sequence belongs to the fimbrial protein family.

It is found in the fimbrium. Its function is as follows. Fimbriae (also called pili), polar filaments radiating from the surface of the bacterium to a length of 0.5-1.5 micrometers and numbering 100-300 per cell, enable bacteria to colonize the epithelium of specific host organs. In Serratia marcescens, this protein is Type-1 fimbrial protein subunit (fimA).